The primary structure comprises 701 residues: MPREVPLERIRNIGIIAHIDAGKTTTTERILFYTGRTYKLGEVHEGTAVMDWMEQERERGITITAAATTAEWTVEGVPYRINIIDTPGHVDFTAEVERSLRVLDGGVVVFDAVAGVEPQSETVWRQADKYHVPRICFVNKMDRIGANFERTVEMIRERLGAKPVPIQFPIGSEDRFRGIVDLITNKAVLYVDDQGKREELDAIPTEIADEVERLRNEMIEAIAETDDELMLLYLEGEELSVEELRRALRKATIKGQLVPVLCGAALRNKGVQRLLDAIVHYLPSPVDIPPVRGTRPGQVAGDDGVEMITRPTSEDAPFTGLVFKIVSDPFVGKLAYFRVYSGKLETGSYVLNSTRNQRERIGRLLQMHANHREEIKEVYAGDIAAMVGPKQSYTGDTICDPNDPIVLESIRFPEPVIQLAIEPKTKADQDKMAVALSKLAEEDPTFRVFTDQETGQTIIAGMGELHLEVIVDRMRREYKVEANQGKPQVAYRESITVPADVDSKFVRQTGGKGQYGHVKLQVEPLERGKGFEFINAIVGGVIPREYIPAVEAGVKEAMASGVIAGYPVVDLKVTLYDGSYHEVDSSEMAFKIAASMGLKEAVRKGRPILLEPVMKVEIVTPEDFLGTVLGDINSRRGHVEGMEARGNAQVIRAYVPLASMFGYTTDLRSATQGRATSSMEFAYYQPLPEALAKEIVEKRRG.

Positions 8–286 (ERIRNIGIIA…AIVHYLPSPV (279 aa)) constitute a tr-type G domain. GTP-binding positions include 17-24 (AHIDAGKT), 85-89 (DTPGH), and 139-142 (NKMD).

The protein belongs to the TRAFAC class translation factor GTPase superfamily. Classic translation factor GTPase family. EF-G/EF-2 subfamily.

The protein resides in the cytoplasm. In terms of biological role, catalyzes the GTP-dependent ribosomal translocation step during translation elongation. During this step, the ribosome changes from the pre-translocational (PRE) to the post-translocational (POST) state as the newly formed A-site-bound peptidyl-tRNA and P-site-bound deacylated tRNA move to the P and E sites, respectively. Catalyzes the coordinated movement of the two tRNA molecules, the mRNA and conformational changes in the ribosome. The chain is Elongation factor G from Roseiflexus sp. (strain RS-1).